Here is a 210-residue protein sequence, read N- to C-terminus: Urease accessory protein UreF (210 aa).

Belongs to the UreF family. As to quaternary structure, ureD, UreF and UreG form a complex that acts as a GTP-hydrolysis-dependent molecular chaperone, activating the urease apoprotein by helping to assemble the nickel containing metallocenter of UreC. The UreE protein probably delivers the nickel.

The protein localises to the cytoplasm. Required for maturation of urease via the functional incorporation of the urease nickel metallocenter. This Cereibacter sphaeroides (strain ATCC 17029 / ATH 2.4.9) (Rhodobacter sphaeroides) protein is Urease accessory protein UreF.